The sequence spans 492 residues: MTELNKLTVADSIKGLKNKDFTSKELVNAHITQIEKHRNLNAYVTETFDLALKQAEAADQNYAQNQPRTLEGIPFAAKDLFCTKGIRTTACSNILKNFVPNYESSVTQNIFDKGGVMLGKTNMDEFAMGSANITSCFGNVISPWKANDDNADLVPGGSSGGSAAAVSGFMASAALGSDTGGSVRQPASFTGLVGFKPTYGRCSRYGMVSFASSLDQAGIFTRSVLDSSIMLEAMMGFDAKDSTSIKAEVPELQSAIGSSMKNIKIGVPLNLGEGGIEPDVMKIWQDTIELLKNAGAEIVDIILPHAKYGVAVYYVIAPAEASSNLSRYDGVRYGLRVERENMTLDEMYEMTRSAGFGEEVKRRIMIGTYVLSSNCMDAYYLKAQKVRRLVANDFNNAFEKVDAIVLPAAPTEAFKIAEKQNDPTIMYLNDLFTIPASLAGLPCASIPAGLSARGLPLGMQIIGKQLDEYNVLKVASTIESGVKHIKFEPAGF.

Catalysis depends on charge relay system residues Lys-78 and Ser-158. Ser-182 functions as the Acyl-ester intermediate in the catalytic mechanism.

This sequence belongs to the amidase family. GatA subfamily. In terms of assembly, heterotrimer of A, B and C subunits.

The enzyme catalyses L-glutamyl-tRNA(Gln) + L-glutamine + ATP + H2O = L-glutaminyl-tRNA(Gln) + L-glutamate + ADP + phosphate + H(+). Its function is as follows. Allows the formation of correctly charged Gln-tRNA(Gln) through the transamidation of misacylated Glu-tRNA(Gln) in organisms which lack glutaminyl-tRNA synthetase. The reaction takes place in the presence of glutamine and ATP through an activated gamma-phospho-Glu-tRNA(Gln). The protein is Glutamyl-tRNA(Gln) amidotransferase subunit A of Rickettsia akari (strain Hartford).